Consider the following 282-residue polypeptide: Protoheme IX farnesyltransferase (282 aa).

9 helical membrane passes run 9–29 (LAKPGIIFGNLITLTGGFLLA), 39–59 (LPLFVYVMIGVALMIAAGCVF), 79–99 (LVTGDISVIQATIYGTILLIL), 102–122 (LVLYYLVNLLTLWIIIIGFIV), 139–159 (VLGGISGAIPPVAGYTAVVNI), 165–185 (LALFLILFFWQIPHSYAIAML), 210–230 (IMLFYLALFVVSCALPAVLGS), 231–251 (ADLFSFIVCMLVALFWMYKSI), and 261–281 (VFAKTVFKFSIIVITAICLTM).

Belongs to the UbiA prenyltransferase family. Protoheme IX farnesyltransferase subfamily.

It localises to the cell inner membrane. The catalysed reaction is heme b + (2E,6E)-farnesyl diphosphate + H2O = Fe(II)-heme o + diphosphate. It functions in the pathway porphyrin-containing compound metabolism; heme O biosynthesis; heme O from protoheme: step 1/1. Functionally, converts heme B (protoheme IX) to heme O by substitution of the vinyl group on carbon 2 of heme B porphyrin ring with a hydroxyethyl farnesyl side group. This Francisella tularensis subsp. holarctica (strain LVS) protein is Protoheme IX farnesyltransferase.